A 237-amino-acid polypeptide reads, in one-letter code: MQKQAELYRGKAKTVYSTENPDLLVLEFRNDTSAGDGARIEQFDRKGMVNNKFNYFIMSKLAEAGIPTQMERLLSDTECLVKKLDMVPVECVVRNRTAGSLVKRLGIEEGIELNPPLFDLFLKNDAMHDPMVNESYCETFGWVSKENLARMKELTYKANDVLKKLFDDAGLILVDFKLEFGLYKGEVVLGDEFSPDGSRLWDKETLEKMDKDRFRQSLGGLIEAYEAVARRLGVQLD.

The protein belongs to the SAICAR synthetase family.

It catalyses the reaction 5-amino-1-(5-phospho-D-ribosyl)imidazole-4-carboxylate + L-aspartate + ATP = (2S)-2-[5-amino-1-(5-phospho-beta-D-ribosyl)imidazole-4-carboxamido]succinate + ADP + phosphate + 2 H(+). It participates in purine metabolism; IMP biosynthesis via de novo pathway; 5-amino-1-(5-phospho-D-ribosyl)imidazole-4-carboxamide from 5-amino-1-(5-phospho-D-ribosyl)imidazole-4-carboxylate: step 1/2. The protein is Phosphoribosylaminoimidazole-succinocarboxamide synthase of Escherichia coli O7:K1 (strain IAI39 / ExPEC).